We begin with the raw amino-acid sequence, 228 residues long: UPF0173 metal-dependent hydrolase RBAM_026340 (228 aa).

This sequence belongs to the UPF0173 family.

The polypeptide is UPF0173 metal-dependent hydrolase RBAM_026340 (Bacillus velezensis (strain DSM 23117 / BGSC 10A6 / LMG 26770 / FZB42) (Bacillus amyloliquefaciens subsp. plantarum)).